The chain runs to 522 residues: Subtilisin-like protease 10 (522 aa).

The N-terminal stretch at Met-1 to Ala-19 is a signal peptide. The propeptide occupies Ala-20–Gln-117. The 78-residue stretch at Ser-36–Ile-113 folds into the Inhibitor I9 domain. The 279-residue stretch at Asn-127–Thr-405 folds into the Peptidase S8 domain. Active-site charge relay system residues include Asp-159 and His-190. An N-linked (GlcNAc...) asparagine glycan is attached at Asn-251. Ser-348 (charge relay system) is an active-site residue. Residues Ser-383–Leu-397 are compositionally biased toward polar residues. Positions Ser-383 to Arg-515 are disordered. 2 N-linked (GlcNAc...) asparagine glycosylation sites follow: Asn-392 and Asn-403. Positions Ser-432–Asn-459 are enriched in pro residues.

This sequence belongs to the peptidase S8 family.

It localises to the secreted. Functionally, secreted subtilisin-like serine protease with keratinolytic activity that contributes to pathogenicity. This is Subtilisin-like protease 10 (SUB10) from Trichophyton verrucosum (strain HKI 0517).